The chain runs to 329 residues: Ferredoxin--NADP reductase 2 (329 aa).

Residues T18, E37, Q45, Y50, V90, F124, D285, and S326 each coordinate FAD.

It belongs to the ferredoxin--NADP reductase type 2 family. As to quaternary structure, homodimer. FAD serves as cofactor.

The enzyme catalyses 2 reduced [2Fe-2S]-[ferredoxin] + NADP(+) + H(+) = 2 oxidized [2Fe-2S]-[ferredoxin] + NADPH. This is Ferredoxin--NADP reductase 2 from Bacillus mycoides (strain KBAB4) (Bacillus weihenstephanensis).